A 66-amino-acid polypeptide reads, in one-letter code: Large ribosomal subunit protein bL33c (66 aa).

The protein belongs to the bacterial ribosomal protein bL33 family.

It is found in the plastid. The protein resides in the chloroplast. The chain is Large ribosomal subunit protein bL33c from Agrostis stolonifera (Creeping bentgrass).